A 72-amino-acid polypeptide reads, in one-letter code: Kappa-conotoxin PVIIA (72 aa).

An N-terminal signal peptide occupies residues 1–22 (MKLTCVVIVVVLFLTACQLITA). A propeptide spanning residues 23–45 (DDSRRTQKHRALRSTTKLSLSTR) is cleaved from the precursor. 3 disulfides stabilise this stretch: Cys-46–Cys-61, Cys-53–Cys-65, and Cys-60–Cys-71. Position 49 is a 4-hydroxyproline (Pro-49).

It belongs to the conotoxin O1 superfamily. Post-translationally, this toxin is not amidated at the C-terminal Val residue. Expressed by the venom duct.

The protein resides in the secreted. Functionally, kappa-conotoxins bind and inhibit voltage-gated potassium channels (Kv). This toxin inhibits the drosophila Shaker channel (IC(50)=57-80 nM). In vivo, when tested in fish, this toxin induces hyperactivity, followed by continuous contraction and extension of major fins, without immobilization or death. Injection of this peptide together with the delta-conotoxin PVIA causes the sudden tetanus of prey (STOP) syndrome, which is a single, lethal 'fin-pop' in envenomed fish. When tested in mice, induces hyperactivity. This Conus purpurascens (Purple cone) protein is Kappa-conotoxin PVIIA.